A 297-amino-acid polypeptide reads, in one-letter code: CCAAT/enhancer-binding protein beta (297 aa).

Positions 1–22 (MHRLLAWDAACLPPPPAAFRPM) are required for Lys-134 sumoylation. Position 3 is an asymmetric dimethylarginine; by CARM1 (R3). A required for MYC transcriptional repression region spans residues 22–105 (MEVANFYYEP…YGAKPSKKPS (84 aa)). Residue K39 is modified to N6-acetyllysine; alternate. K39 bears the N6-methylated lysine; alternate mark. N6-acetyllysine; by KAT2A and KAT2B is present on residues K99 and K102. The residue at position 103 (K103) is an N6-acetyllysine; by KAT2A and KAT2B; alternate. Residue K103 forms a Glycyl lysine isopeptide (Lys-Gly) (interchain with G-Cter in SUMO2); alternate linkage. Phosphoserine; by RPS6KA1 and PKC/PRKCA is present on S105. K134 is covalently cross-linked (Glycyl lysine isopeptide (Lys-Gly) (interchain with G-Cter in SUMO2); alternate). K134 participates in a covalent cross-link: Glycyl lysine isopeptide (Lys-Gly) (interchain with G-Cter in SUMO); alternate. K145 participates in a covalent cross-link: Glycyl lysine isopeptide (Lys-Gly) (interchain with G-Cter in SUMO2). The disordered stretch occupies residues 172 to 201 (SGSSGSLSTSSSSSPPGTPSPADAKAAPAA). T180 is modified (phosphothreonine; by GSK3-beta). 2 O-linked (GlcNAc) serine glycosylation sites follow: S181 and S182. S185 carries the post-translational modification Phosphoserine; by GSK3-beta. T189 carries the phosphothreonine; by RPS6KA1, CDK2 and MAPK modification. Glycyl lysine isopeptide (Lys-Gly) (interchain with G-Cter in SUMO2) cross-links involve residues K212 and K214. The 64-residue stretch at 223–286 (SDEYKMRRER…STLRNLFKQL (64 aa)) folds into the bZIP domain. A basic motif region spans residues 227–247 (KMRRERNNIAVRKSRDKAKMR). S240 bears the Phosphoserine; by PKC/PRKCA mark. Residues 249-256 (LETQHKVL) form a leucine-zipper region. S277 is modified (phosphoserine; by CaMK2). Residue K284 forms a Glycyl lysine isopeptide (Lys-Gly) (interchain with G-Cter in SUMO2) linkage.

It belongs to the bZIP family. C/EBP subfamily. Binds DNA as a homodimer and as a heterodimer. Interacts with MYB; within the complex, MYB and CEBPB bind to different promoter regions. Interacts with ATF4. Binds DNA as a heterodimer with ATF4. Can form stable heterodimers with CEBPA, CEBPD, CEBPE and CEBPG. Interacts with SIX1. Isoform 2 and isoform 3 also form heterodimers. Interacts with TRIM28 and PTGES2. Interacts with PRDM16. Interacts with CCDC85B. Forms a complex with THOC5. Interacts with ZNF638; this interaction increases transcriptional activation. Interacts with CIDEA and CIDEC; these interactions increase transcriptional activation of a subset of CEBPB downstream target genes. Interacts with DDIT3/CHOP. Interacts with EP300; recruits EP300 to chromatin. Interacts with RORA; the interaction disrupts interaction with EP300. Interacts (not methylated) with MED23, MED26, SMARCA2, SMARCB1 and SMARCC1. Interacts with KAT2A and KAT2B. Interacts with ATF5; EP300 is required for ATF5 and CEBPB interaction and DNA binding. Interacts with NFE2L1; the heterodimer represses expression of DSPP during odontoblast differentiation. In terms of processing, phosphorylated at Thr-189 by MAPK and CDK2, serves to prime phosphorylation at Thr-180 and Ser-185 by GSK3B and acquire DNA-binding as well as transactivation activities, required to induce adipogenesis. MAPK and CDK2 act sequentially to maintain Thr-189 in the primed phosphorylated state during mitotical cloning expansion and thereby progression of terminal differentiation. Phosphorylation at Ser-105 enhances transactivation activity. Phosphorylation at Ser-277 in response to calcium increases transactivation activity. Phosphorylated at Thr-189 by RPS6KA1. Post-translationally, methylated. Methylation at Arg-3 by CARM1 and at Lys-39 by EHMT2 inhibit transactivation activity. Methylation is probably inhibited by phosphorylation at Thr-189. Sumoylated by polymeric chains of SUMO2 or SUMO3. Sumoylation at Lys-134 is required for inhibition of T-cells proliferation. In adipocytes, sumoylation at Lys-134 by PIAS1 leads to ubiquitination and subsequent proteasomal degradation. Desumoylated by SENP2, which abolishes ubiquitination and stabilizes protein levels. In terms of processing, ubiquitinated, leading to proteasomal degradation. Post-translationally, O-glycosylated, glycosylation at Ser-181 and Ser-182 prevents phosphorylation on Thr-189, Ser-185 and Thr-180 and DNA binding activity which delays the adipocyte differentiation program. Acetylated. Acetylation at Lys-39 is an important and dynamic regulatory event that contributes to its ability to transactivate target genes, including those associated with adipogenesis and adipocyte function. Deacetylation by HDAC1 represses its transactivation activity. Acetylated by KAT2A and KAT2B within a cluster of lysine residues between amino acids 99-103, this acetylation is strongly induced by glucocorticoid treatment and enhances transactivation activity. As to expression, liver and lung.

It is found in the nucleus. The protein localises to the cytoplasm. Its function is as follows. Important transcription factor regulating the expression of genes involved in immune and inflammatory responses. Also plays a significant role in adipogenesis, as well as in the gluconeogenic pathway, liver regeneration, and hematopoiesis. The consensus recognition site is 5'-T[TG]NNGNAA[TG]-3'. Its functional capacity is governed by protein interactions and post-translational protein modifications. During early embryogenesis, plays essential and redundant roles with CEBPA. Has a promitotic effect on many cell types such as hepatocytes and adipocytes but has an antiproliferative effect on T-cells by repressing MYC expression, facilitating differentiation along the T-helper 2 lineage. Binds to regulatory regions of several acute-phase and cytokines genes and plays a role in the regulation of acute-phase reaction and inflammation. Also plays a role in intracellular bacteria killing. During adipogenesis, is rapidly expressed and, after activation by phosphorylation, induces CEBPA and PPARG, which turn on the series of adipocyte genes that give rise to the adipocyte phenotype. The delayed transactivation of the CEBPA and PPARG genes by CEBPB appears necessary to allow mitotic clonal expansion and thereby progression of terminal differentiation. Essential for female reproduction because of a critical role in ovarian follicle development. Restricts osteoclastogenesis: together with NFE2L1; represses expression of DSPP during odontoblast differentiation. Functionally, essential for gene expression induction in activated macrophages. Plays a major role in immune responses such as CD4(+) T-cell response, granuloma formation and endotoxin shock. Not essential for intracellular bacteria killing. In terms of biological role, acts as a dominant negative through heterodimerization with isoform 2. Promotes osteoblast differentiation and osteoclastogenesis. The protein is CCAAT/enhancer-binding protein beta of Rattus norvegicus (Rat).